Reading from the N-terminus, the 647-residue chain is 5-aminolevulinate synthase, non-specific, mitochondrial (647 aa).

A mitochondrion-targeting transit peptide spans 1 to 56; that stretch reads METVVRRCPFLSRVPQAFLQKAGKSLLFYAQNCPKMMEIGAKPAPRALSTSAVLCQ. Residues 61 to 112 are disordered; sequence TPPANEKDKAAKAEVQQAPDGSQQAPDGSQQTADGTQLPSGHPSLASSQGTG. Residues 79–112 show a composition bias toward polar residues; that stretch reads PDGSQQAPDGSQQTADGTQLPSGHPSLASSQGTG. Arg-224, Ser-341, and Lys-360 together coordinate substrate. Pyridoxal 5'-phosphate contacts are provided by Ser-393, His-421, and Thr-449. Residue Lys-452 is part of the active site. The residue at position 452 (Lys-452) is an N6-(pyridoxal phosphate)lysine. Pyridoxal 5'-phosphate is bound by residues Thr-481 and Thr-482. Thr-569 is a substrate binding site. A Hydroxyproline modification is found at Pro-583.

The protein belongs to the class-II pyridoxal-phosphate-dependent aminotransferase family. As to quaternary structure, homodimer. Interacts (hydroxylated form) with VHL. It depends on pyridoxal 5'-phosphate as a cofactor. Post-translationally, in normoxia, is hydroxylated at Pro-583, promoting interaction with VHL, initiating ubiquitination and subsequent degradation via the proteasome. In terms of processing, ubiquitinated; in normoxia following hydroxylation and interaction with VHL, leading to its subsequent degradation via the proteasome.

The protein localises to the mitochondrion inner membrane. The enzyme catalyses succinyl-CoA + glycine + H(+) = 5-aminolevulinate + CO2 + CoA. It functions in the pathway porphyrin-containing compound metabolism; protoporphyrin-IX biosynthesis; 5-aminolevulinate from glycine: step 1/1. In terms of biological role, catalyzes the pyridoxal 5'-phosphate (PLP)-dependent condensation of succinyl-CoA and glycine to form aminolevulinic acid (ALA), with CoA and CO2 as by-products. This chain is 5-aminolevulinate synthase, non-specific, mitochondrial (ALAS1), found in Bos taurus (Bovine).